We begin with the raw amino-acid sequence, 259 residues long: UPF0246 protein NMCC_0856 (259 aa).

It belongs to the UPF0246 family.

This Neisseria meningitidis serogroup C (strain 053442) protein is UPF0246 protein NMCC_0856.